We begin with the raw amino-acid sequence, 219 residues long: Probable nicotinate-nucleotide adenylyltransferase (219 aa).

This sequence belongs to the NadD family.

It carries out the reaction nicotinate beta-D-ribonucleotide + ATP + H(+) = deamido-NAD(+) + diphosphate. Its pathway is cofactor biosynthesis; NAD(+) biosynthesis; deamido-NAD(+) from nicotinate D-ribonucleotide: step 1/1. In terms of biological role, catalyzes the reversible adenylation of nicotinate mononucleotide (NaMN) to nicotinic acid adenine dinucleotide (NaAD). The sequence is that of Probable nicotinate-nucleotide adenylyltransferase from Chromohalobacter salexigens (strain ATCC BAA-138 / DSM 3043 / CIP 106854 / NCIMB 13768 / 1H11).